A 378-amino-acid chain; its full sequence is Forkhead box protein F1 (378 aa).

Positions 1 to 45 (MSAPDKQQPPHGGGTGGGGGAGGQAMDPAAAGPTKAKKTNAGVRR) are disordered. Residues 11–23 (HGGGTGGGGGAGG) are compositionally biased toward gly residues. Residues 24–42 (QAMDPAAAGPTKAKKTNAG) show a composition bias toward low complexity. Positions 47–138 (EKPPYSYIAL…EFMFEEGSFR (92 aa)) form a DNA-binding region, fork-head.

In terms of tissue distribution, expressed primarily in lung in alveolar type II pneumocyte cells, and to a lesser extent in placenta, stomach, intestine and colon.

Its subcellular location is the nucleus. Its function is as follows. Probable transcription activator for a number of lung-specific genes. This is Forkhead box protein F1 (Foxf1) from Mus musculus (Mouse).